A 579-amino-acid polypeptide reads, in one-letter code: Fatty-acid amide hydrolase 1 (579 aa).

Residues 9–29 (ALPGASGVALACCFVAAAVAL) traverse the membrane as a helical segment. Topologically, residues 30-403 (RWSGRRTARG…GDFVDPCLGD (374 aa)) are cytoplasmic. The Charge relay system role is filled by Lys142. Substrate is bound by residues Met191, Ser217, and 238 to 241 (IGGS). The Charge relay system role is filled by Ser217. Ser241 acts as the Acyl-ester intermediate in catalysis. Phosphoserine is present on Ser241. Residues 404–433 (LVSILKLPQWLKGLLAFLVKPLLPRLSAFL) lie within the membrane without spanning it. Over 434-579 (SNMKSRSAGK…RLMTPEKQSS (146 aa)) the chain is Cytoplasmic.

Belongs to the amidase family. In terms of assembly, homodimer. In terms of tissue distribution, highly expressed in the brain, small intestine, pancreas, skeletal muscle and testis. Also expressed in the kidney, liver, lung, placenta and prostate.

The protein resides in the endomembrane system. Its subcellular location is the cytoplasm. The protein localises to the cytoskeleton. It carries out the reaction N-(5Z,8Z,11Z,14Z-eicosatetraenoyl)-ethanolamine + H2O = ethanolamine + (5Z,8Z,11Z,14Z)-eicosatetraenoate. The enzyme catalyses (9Z)-octadecenamide + H2O = (9Z)-octadecenoate + NH4(+). The catalysed reaction is 2-(5Z,8Z,11Z,14Z-eicosatetraenoyl)-glycerol + H2O = glycerol + (5Z,8Z,11Z,14Z)-eicosatetraenoate + H(+). It catalyses the reaction N-(9Z-octadecenoyl) ethanolamine + H2O = ethanolamine + (9Z)-octadecenoate. It carries out the reaction N-hexadecanoylethanolamine + H2O = ethanolamine + hexadecanoate. The enzyme catalyses hexadecanamide + H2O = hexadecanoate + NH4(+). The catalysed reaction is tetradecamide + H2O = tetradecanoate + NH4(+). It catalyses the reaction N-(9Z-octadecenoyl)-taurine + H2O = taurine + (9Z)-octadecenoate. It carries out the reaction (9Z,12Z,15Z)-octadecatrienamide + H2O = (9Z,12Z,15Z)-octadecatrienoate + NH4(+). The enzyme catalyses (5Z,8Z,11Z,14Z)-eicosatetraenamide + H2O = (5Z,8Z,11Z,14Z)-eicosatetraenoate + NH4(+). The catalysed reaction is (6Z)-octadecenamide + H2O = (6Z)-octadecenoate + NH4(+). It catalyses the reaction (15Z)-tetracosenamide + H2O = (15Z)-tetracosenoate + NH4(+). It carries out the reaction (8Z,11Z,14Z)-eicosatrienamide + H2O = (8Z,11Z,14Z)-eicosatrienoate + NH4(+). The enzyme catalyses (11Z,14Z,17Z)-eicosatrienamide + H2O = (11Z,14Z,17Z)-eicosatrienoate + NH4(+). The catalysed reaction is (11Z,14Z)-eicosadienamide + H2O = (11Z,14Z)-eicosadienoate + NH4(+). It catalyses the reaction (9Z,12Z)-octadecadienamide + H2O = (9Z,12Z)-octadecadienoate + NH4(+). It carries out the reaction 1-O-methyl-(5Z,8Z,11Z,14Z)-eicosatetraenoate + H2O = methanol + (5Z,8Z,11Z,14Z)-eicosatetraenoate + H(+). The enzyme catalyses (11Z)-eicosenamide + H2O = (11Z)-eicosenoate + NH4(+). The catalysed reaction is N-(9Z-hexadecenoyl) ethanolamine + H2O = (9Z)-hexadecenoate + ethanolamine. It catalyses the reaction N-octadecanoyl ethanolamine + H2O = octadecanoate + ethanolamine. It carries out the reaction N-docosanoyl-ethanolamine + H2O = docosanoate + ethanolamine. The enzyme catalyses N-tetracosanoyl-taurine + H2O = tetracosanoate + taurine. The catalysed reaction is N-(15Z-tetracosenoyl)-ethanolamine + H2O = (15Z)-tetracosenoate + ethanolamine. It catalyses the reaction N-docosanoyl-taurine + H2O = docosanoate + taurine. It carries out the reaction N-(15Z-tetracosenoyl)-taurine + H2O = (15Z)-tetracosenoate + taurine. The enzyme catalyses N-tricosanoyl-taurine + H2O = tricosanoate + taurine. The catalysed reaction is (9Z)-octadecenoate + glycine = N-(9Z-octadecenoyl)glycine + H2O. It catalyses the reaction N-(5Z,8Z,11Z,14Z)-eicosatetraenoyl-glycine + H2O = (5Z,8Z,11Z,14Z)-eicosatetraenoate + glycine. It carries out the reaction N-(5Z,8Z,11Z,14Z-eicosatetraenoyl)-L-serine + H2O = (5Z,8Z,11Z,14Z)-eicosatetraenoate + L-serine. Inhibited by O-aryl carbamates and alpha-keto heterocycles. Inhibited by trifluoromethyl ketone. Catalyzes the hydrolysis of endogenous amidated lipids like the sleep-inducing lipid oleamide ((9Z)-octadecenamide), the endocannabinoid anandamide (N-(5Z,8Z,11Z,14Z-eicosatetraenoyl)-ethanolamine), as well as other fatty amides, to their corresponding fatty acids, thereby regulating the signaling functions of these molecules. Hydrolyzes polyunsaturated substrate anandamide preferentially as compared to monounsaturated substrates. It can also catalyze the hydrolysis of the endocannabinoid 2-arachidonoylglycerol (2-(5Z,8Z,11Z,14Z-eicosatetraenoyl)-glycerol). FAAH cooperates with PM20D1 in the hydrolysis of amino acid-conjugated fatty acids such as N-fatty acyl glycine and N-fatty acyl-L-serine, thereby acting as a physiological regulator of specific subsets of intracellular, but not of extracellular, N-fatty acyl amino acids. The protein is Fatty-acid amide hydrolase 1 (FAAH) of Homo sapiens (Human).